The sequence spans 179 residues: Large ribosomal subunit protein uL5 (179 aa).

The protein belongs to the universal ribosomal protein uL5 family. As to quaternary structure, part of the 50S ribosomal subunit; part of the 5S rRNA/L5/L18/L25 subcomplex. Contacts the 5S rRNA and the P site tRNA. Forms a bridge to the 30S subunit in the 70S ribosome.

This is one of the proteins that bind and probably mediate the attachment of the 5S RNA into the large ribosomal subunit, where it forms part of the central protuberance. In the 70S ribosome it contacts protein S13 of the 30S subunit (bridge B1b), connecting the 2 subunits; this bridge is implicated in subunit movement. Contacts the P site tRNA; the 5S rRNA and some of its associated proteins might help stabilize positioning of ribosome-bound tRNAs. This chain is Large ribosomal subunit protein uL5, found in Shewanella loihica (strain ATCC BAA-1088 / PV-4).